The chain runs to 189 residues: Orotate phosphoribosyltransferase (189 aa).

5-phospho-alpha-D-ribose 1-diphosphate is bound by residues Arg94, Lys95, Lys98, and 120-128; that span reads EDVTTTGGS. Residues Thr124 and Arg152 each contribute to the orotate site.

It belongs to the purine/pyrimidine phosphoribosyltransferase family. PyrE subfamily. Homodimer. Requires Mg(2+) as cofactor.

It catalyses the reaction orotidine 5'-phosphate + diphosphate = orotate + 5-phospho-alpha-D-ribose 1-diphosphate. It functions in the pathway pyrimidine metabolism; UMP biosynthesis via de novo pathway; UMP from orotate: step 1/2. Catalyzes the transfer of a ribosyl phosphate group from 5-phosphoribose 1-diphosphate to orotate, leading to the formation of orotidine monophosphate (OMP). In Thermococcus gammatolerans (strain DSM 15229 / JCM 11827 / EJ3), this protein is Orotate phosphoribosyltransferase.